We begin with the raw amino-acid sequence, 831 residues long: DNA ligase (831 aa).

Residues 34–38, 83–84, and glutamate 114 each bind NAD(+); these read DADYD and SL. Lysine 116 acts as the N6-AMP-lysine intermediate in catalysis. Residues arginine 137, glutamate 174, lysine 291, and lysine 315 each contribute to the NAD(+) site. Residues cysteine 409, cysteine 412, cysteine 427, and cysteine 433 each contribute to the Zn(2+) site. The region spanning 749–831 is the BRCT domain; that stretch reads AHTAPLNGQS…LAFLEQYSAQ (83 aa).

It belongs to the NAD-dependent DNA ligase family. LigA subfamily. Mg(2+) serves as cofactor. Mn(2+) is required as a cofactor.

The enzyme catalyses NAD(+) + (deoxyribonucleotide)n-3'-hydroxyl + 5'-phospho-(deoxyribonucleotide)m = (deoxyribonucleotide)n+m + AMP + beta-nicotinamide D-nucleotide.. In terms of biological role, DNA ligase that catalyzes the formation of phosphodiester linkages between 5'-phosphoryl and 3'-hydroxyl groups in double-stranded DNA using NAD as a coenzyme and as the energy source for the reaction. It is essential for DNA replication and repair of damaged DNA. This chain is DNA ligase, found in Xylella fastidiosa (strain M23).